A 150-amino-acid polypeptide reads, in one-letter code: Thyroid hormone-inducible hepatic protein (150 aa).

The segment at 83–104 (KVAGNETSEAENDAAETEEAEE) is disordered. The residue at position 90 (serine 90) is a Phosphoserine. Residues 90–104 (SEAENDAAETEEAEE) are compositionally biased toward acidic residues.

It belongs to the SPOT14 family. In terms of assembly, homodimer. Heterodimer with MID1IP1. Interacts with THRB and PLAGL1. As to expression, mainly expressed in tissues that synthesize triglycerides.

It localises to the nucleus. Its subcellular location is the cytoplasm. Functionally, plays a role in the regulation of lipogenesis, especially in lactating mammary gland. Important for the biosynthesis of triglycerides with medium-length fatty acid chains. May modulate lipogenesis by interacting with MID1IP1 and preventing its interaction with ACACA. May function as transcriptional coactivator. May modulate the transcription factor activity of THRB. The polypeptide is Thyroid hormone-inducible hepatic protein (Thrsp) (Mus musculus (Mouse)).